A 32-amino-acid chain; its full sequence is MSDIN-like toxin proprotein a (32 aa).

A propeptide spanning residues 1-10 (MSDINATRLP) is cleaved from the precursor. Positions 11-18 (IIGILLPP) form a cross-link, cyclopeptide (Ile-Pro). Residues 19 to 32 (CIGDDVTLLLTRGE) constitute a propeptide that is removed on maturation.

It belongs to the MSDIN fungal toxin family. In terms of processing, processed by the macrocyclase-peptidase enzyme POPB to yield a toxic cyclic octapeptide. POPB first removes 10 residues from the N-terminus. Conformational trapping of the remaining peptide forces the enzyme to release this intermediate rather than proceed to macrocyclization. The enzyme rebinds the remaining peptide in a different conformation and catalyzes macrocyclization of the N-terminal 8 residues.

Its function is as follows. Probable toxin that belongs to the MSDIN-like toxin family responsible for a large number of food poisoning cases and deaths. In Amanita phalloides (Death cap), this protein is MSDIN-like toxin proprotein a.